Here is a 385-residue protein sequence, read N- to C-terminus: ATP phosphoribosyltransferase regulatory subunit (385 aa).

Belongs to the class-II aminoacyl-tRNA synthetase family. HisZ subfamily. In terms of assembly, heteromultimer composed of HisG and HisZ subunits.

It is found in the cytoplasm. Its pathway is amino-acid biosynthesis; L-histidine biosynthesis; L-histidine from 5-phospho-alpha-D-ribose 1-diphosphate: step 1/9. Its function is as follows. Required for the first step of histidine biosynthesis. May allow the feedback regulation of ATP phosphoribosyltransferase activity by histidine. This chain is ATP phosphoribosyltransferase regulatory subunit, found in Bordetella pertussis (strain Tohama I / ATCC BAA-589 / NCTC 13251).